Consider the following 370-residue polypeptide: Phosphate-binding protein PstS 2 (370 aa).

The N-terminal stretch at 1 to 22 is a signal peptide; that stretch reads MKFARSGAAVSLLAAGTLVLTA. The N-palmitoyl cysteine moiety is linked to residue Cys-23. Cys-23 carries S-diacylglycerol cysteine lipidation. Phosphate is bound by residues 54–56, Ser-84, Asp-102, and 191–193; these read STA and SGT.

The protein belongs to the PstS family. In terms of assembly, the complex is composed of two ATP-binding proteins (PstB), two transmembrane proteins (PstC and PstA) and a solute-binding protein (PstS).

It is found in the cell membrane. Its function is as follows. Functions in inorganic phosphate uptake, although probably not the main uptake protein under phosphate starvation. Part of the ABC transporter complex PstSACB involved in phosphate import. The sequence is that of Phosphate-binding protein PstS 2 (pstS2) from Mycobacterium tuberculosis (strain ATCC 25618 / H37Rv).